We begin with the raw amino-acid sequence, 378 residues long: Integrator complex assembly factor WDR73 (378 aa).

6 WD repeats span residues 73–113 (DFKV…VWQV), 121–163 (KAVS…VVDL), 167–205 (KTTYTSDVSDSEELSSLQVLDADTFAFCCASGRLGLVDT), 214–255 (NRSP…LLDP), 266–305 (QCPVSVPSPDPELLRVTWAPGLKNCLAISGFDGTVQVYDA), and 322–371 (EPLF…VWDW).

This sequence belongs to the WD repeat WDR73 family. Interacts with INTS9 and INTS11; the interaction is direct. Part of the multiprotein complex composed of BRAT1, WDR73, as well as integrator complex subunits INTS9 and INTS11. As to expression, expressed in kidney and brain. In the kidney, expressed in glomeruli, most probably in podocytes, and in tubules (at protein level). In the brain, expressed in the cerebellum, with high levels in Purkinje cells and their projecting axons, in the deep cerebellar nuclei and in pyramidal neurons of the cerebral cortex (at protein level). In the white matter, mainly present in astrocytes, but not in oligodendrocytes (at protein level). Also highly expressed in endothelial cells of cerebral capillaries (at protein level).

It is found in the cytoplasm. Its subcellular location is the cytoskeleton. The protein localises to the spindle. It localises to the spindle pole. The protein resides in the cleavage furrow. Component of a multiprotein complex required for the assembly of the RNA endonuclease module of the integrator complex. Associates with INTS9 and INTS11 in the cytoplasm, stabilizing the INTS9-INTS11 heterodimer and blocking the active site of INTS11. BRAT1 then joins the complex and plugs the active site of INTS11, leading to WDR73 release and nuclear import of INTS9 and INTS11. The sequence is that of Integrator complex assembly factor WDR73 from Homo sapiens (Human).